Here is a 149-residue protein sequence, read N- to C-terminus: Ribonuclease pancreatic (149 aa).

The signal sequence occupies residues 1-25 (MGLEKSFILFSLLVLVLGWVQPSLS). Residues 30–40 (ADKFKRQHMDT) are compositionally biased toward basic and acidic residues. Positions 30–49 (ADKFKRQHMDTEGSSNSSPT) are disordered. Substrate-binding residues include Lys-32 and Arg-35. The Proton acceptor role is filled by His-37. 4 disulfides stabilise this stretch: Cys-51/Cys-109, Cys-65/Cys-120, Cys-83/Cys-135, and Cys-90/Cys-97. The N-linked (GlcNAc...) asparagine glycan is linked to Asn-62. Position 66-70 (66-70 (KPVNT)) interacts with substrate. The N-linked (GlcNAc...) asparagine glycan is linked to Asn-87. The substrate site is built by Lys-91 and Arg-110. Residue His-144 is the Proton donor of the active site.

It belongs to the pancreatic ribonuclease family. In terms of assembly, monomer. Interacts with and forms tight 1:1 complexes with RNH1. Dimerization of two such complexes may occur. Interaction with RNH1 inhibits this protein. As to expression, pancreas.

The protein localises to the secreted. It carries out the reaction an [RNA] containing cytidine + H2O = an [RNA]-3'-cytidine-3'-phosphate + a 5'-hydroxy-ribonucleotide-3'-[RNA].. The enzyme catalyses an [RNA] containing uridine + H2O = an [RNA]-3'-uridine-3'-phosphate + a 5'-hydroxy-ribonucleotide-3'-[RNA].. In terms of biological role, endonuclease that catalyzes the cleavage of RNA on the 3' side of pyrimidine nucleotides. Acts on single-stranded and double-stranded RNA. This chain is Ribonuclease pancreatic (RNASE1), found in Niviventer cremoriventer (Dark-tailed tree rat).